The following is a 235-amino-acid chain: Glutathione S-transferase L3 (235 aa).

The GST N-terminal domain maps to 27–108 (GTTRLYTSYV…YLDNTFEGPS (82 aa)). Glutathione contacts are provided by residues 37 to 38 (CP), 65 to 66 (NR), 79 to 80 (KV), and 92 to 93 (ES). Residues 86–230 (NGKIIGESLD…MDPKEIVEVF (145 aa)) enclose the GST C-terminal domain.

Belongs to the GST superfamily. Lambda family.

Its subcellular location is the cytoplasm. It localises to the cytosol. It catalyses the reaction RX + glutathione = an S-substituted glutathione + a halide anion + H(+). Its function is as follows. Catalyzes the glutathione-dependent reduction of S-glutathionylquercetin to quercetin. The sequence is that of Glutathione S-transferase L3 (GSTL3) from Arabidopsis thaliana (Mouse-ear cress).